The following is a 647-amino-acid chain: Calmodulin-binding protein 60 B (647 aa).

Polar residues predominate over residues 1-10 (MMDSGNNNMN). Positions 1 to 26 (MMDSGNNNMNRAKRNLDGNDDDQPER) are disordered. Residues 8–85 (NMNRAKRNLD…TGSSGSSPKR (78 aa)) form a calmodulin-binding region. The short motif at 12-19 (AKRNLDGN) is the Nuclear localization signal element. The interval 155–278 (EDDEDWTQEE…AFHKKLTAEG (124 aa)) is DNA-binding.

Belongs to the plant ACBP60 protein family. As to quaternary structure, interacts with calmodulin (CaM). Expressed in leaves, stems, flowers, developing seeds and root.

The protein localises to the nucleus. In terms of biological role, transcription activator that binds DNA in a sequence-specific manner, likely 5'-GAAATTTTGG-3', to promote the expression of target genes. The sequence is that of Calmodulin-binding protein 60 B from Arabidopsis thaliana (Mouse-ear cress).